The chain runs to 98 residues: NADH-ubiquinone oxidoreductase chain 4L (98 aa).

Transmembrane regions (helical) follow at residues 1 to 21 (MPYIYMNITLAFVISLIGTLM), 29 to 49 (SLLCLEGMLLSLFTLNALLSL), and 61 to 81 (LILLVFAACEAAVGLALLVMI).

It belongs to the complex I subunit 4L family. As to quaternary structure, core subunit of respiratory chain NADH dehydrogenase (Complex I) which is composed of 45 different subunits.

The protein localises to the mitochondrion inner membrane. The enzyme catalyses a ubiquinone + NADH + 5 H(+)(in) = a ubiquinol + NAD(+) + 4 H(+)(out). Its function is as follows. Core subunit of the mitochondrial membrane respiratory chain NADH dehydrogenase (Complex I) which catalyzes electron transfer from NADH through the respiratory chain, using ubiquinone as an electron acceptor. Part of the enzyme membrane arm which is embedded in the lipid bilayer and involved in proton translocation. The chain is NADH-ubiquinone oxidoreductase chain 4L (MT-ND4L) from Elephas maximus (Indian elephant).